A 512-amino-acid polypeptide reads, in one-letter code: FACT complex subunit pob3 (512 aa).

Acidic residues predominate over residues 460–504; it reads LDDEDEEGDEEMEEALSEDEDFQAESESDVAEEYDENAESSDEEG. A disordered region spans residues 460 to 512; that stretch reads LDDEDEEGDEEMEEALSEDEDFQAESESDVAEEYDENAESSDEEGASGAEGSE.

Belongs to the SSRP1 family. Forms a stable heterodimer with spt16. The spt16-pob3 dimer weakly associates with multiple molecules of nhp6 to form the FACT complex. Interacts with abo1.

The protein localises to the nucleus. It localises to the chromosome. In terms of biological role, component of the FACT complex, a general chromatin factor that acts to reorganize nucleosomes. The FACT complex is involved in multiple processes that require DNA as a template such as mRNA elongation, DNA replication and DNA repair. During transcription elongation the FACT complex acts as a histone chaperone that both destabilizes and restores nucleosomal structure. It facilitates the passage of RNA polymerase II and transcription by promoting the dissociation of one histone H2A-H2B dimer from the nucleosome, then subsequently promotes the reestablishment of the nucleosome following the passage of RNA polymerase II. The sequence is that of FACT complex subunit pob3 from Schizosaccharomyces pombe (strain 972 / ATCC 24843) (Fission yeast).